Consider the following 200-residue polypeptide: NADH-quinone oxidoreductase subunit C (200 aa).

It belongs to the complex I 30 kDa subunit family. NDH-1 is composed of 14 different subunits. Subunits NuoB, C, D, E, F, and G constitute the peripheral sector of the complex.

It localises to the cell inner membrane. It catalyses the reaction a quinone + NADH + 5 H(+)(in) = a quinol + NAD(+) + 4 H(+)(out). Functionally, NDH-1 shuttles electrons from NADH, via FMN and iron-sulfur (Fe-S) centers, to quinones in the respiratory chain. The immediate electron acceptor for the enzyme in this species is believed to be ubiquinone. Couples the redox reaction to proton translocation (for every two electrons transferred, four hydrogen ions are translocated across the cytoplasmic membrane), and thus conserves the redox energy in a proton gradient. The sequence is that of NADH-quinone oxidoreductase subunit C from Burkholderia cenocepacia (strain HI2424).